The sequence spans 500 residues: Probable cytosol aminopeptidase (500 aa).

The Mn(2+) site is built by Lys265 and Asp270. Lys277 is a catalytic residue. 3 residues coordinate Mn(2+): Asp288, Asp347, and Glu349. Arg351 is an active-site residue.

Belongs to the peptidase M17 family. It depends on Mn(2+) as a cofactor.

It localises to the cytoplasm. It catalyses the reaction Release of an N-terminal amino acid, Xaa-|-Yaa-, in which Xaa is preferably Leu, but may be other amino acids including Pro although not Arg or Lys, and Yaa may be Pro. Amino acid amides and methyl esters are also readily hydrolyzed, but rates on arylamides are exceedingly low.. The catalysed reaction is Release of an N-terminal amino acid, preferentially leucine, but not glutamic or aspartic acids.. Presumably involved in the processing and regular turnover of intracellular proteins. Catalyzes the removal of unsubstituted N-terminal amino acids from various peptides. The sequence is that of Probable cytosol aminopeptidase from Rickettsia felis (strain ATCC VR-1525 / URRWXCal2) (Rickettsia azadi).